The chain runs to 156 residues: MSPLVAVLVFFSAALGVPGTGVAGNPHGLDAIFEPPVTPAPPTRAPRREELEWDDEDHPLLGLEPPVGSRCHPYIAYSLPPDMTAVTSVVVKPYCSPPEVILWASGTAYLVNPFVAIQALAIGEPLNEAALKELGEVAVHKDSLPPLRYNGGPPAE.

The first 16 residues, 1-16 (MSPLVAVLVFFSAALG), serve as a signal peptide directing secretion. The interaction with gH stretch occupies residues 21 to 141 (GVAGNPHGLD…KELGEVAVHK (121 aa)). The gL alphaherpesvirus-type domain occupies 50–156 (ELEWDDEDHP…LRYNGGPPAE (107 aa)). A disulfide bridge connects residues C71 and C95.

It belongs to the herpesviridae glycoprotein L (gL) family. Alphaherpesvirinae gL subfamily. Interacts with glycoprotein H (gH); this interaction is necessary for the correct processing and cell surface expression of gH. The heterodimer gH/gL seems to interact with gB trimers during fusion. In terms of processing, O-glycosylated, and sialylated.

It is found in the virion membrane. Its subcellular location is the host cell membrane. The protein resides in the host Golgi apparatus. It localises to the host trans-Golgi network. The heterodimer glycoprotein H-glycoprotein L is required for the fusion of viral and plasma membranes leading to virus entry into the host cell. Acts as a functional inhibitor of gH and maintains gH in an inhibited form. Upon binding to host integrins, gL dissociates from gH leading to activation of the viral fusion glycoproteins gB and gH. The chain is Envelope glycoprotein L from Sus scrofa (Pig).